We begin with the raw amino-acid sequence, 87 residues long: Putative defensin-like protein 231 (87 aa).

Positions 1 to 26 (MKFATCFLVSYVLVFLVLSVCKEVEA) are cleaved as a signal peptide. Intrachain disulfides connect C30–C85, C40–C66, C48–C79, and C64–C81.

Belongs to the DEFL family.

It localises to the secreted. This Arabidopsis thaliana (Mouse-ear cress) protein is Putative defensin-like protein 231 (SCRL25).